We begin with the raw amino-acid sequence, 45 residues long: Mu-conotoxin-like Cal 12.1.1d (45 aa).

Intrachain disulfides connect C3–C16, C11–C28, C18–C33, and C27–C39. W17 is subject to 6'-bromotryptophan. At E21 the chain carries 4-carboxyglutamate. P23 is modified (4-hydroxyproline). 6'-bromotryptophan occurs at positions 37 and 38. At P40 the chain carries 4-hydroxyproline. 6'-bromotryptophan is present on W44.

In terms of tissue distribution, expressed by the venom duct.

It localises to the secreted. Functionally, mu-conotoxins block voltage-gated sodium channels. This toxin reversibly blocks voltage-gated sodium channel in cephalopods, with no alteration in the voltage dependence of sodium conductance or on the kinetics of inactivation. This Californiconus californicus (California cone) protein is Mu-conotoxin-like Cal 12.1.1d.